A 179-amino-acid polypeptide reads, in one-letter code: Replication restart protein DnaT (179 aa).

The tract at residues 151–179 (SRASNGGQPKRDVNSVSEPDSHIPRGFRG) is disordered. Positions 159 to 173 (PKRDVNSVSEPDSHI) are enriched in basic and acidic residues.

Belongs to the DnaT family. As to quaternary structure, homooligomerizes. Interacts with PriB. Component of the replication restart primosome. Primosome assembly occurs via a 'hand-off' mechanism. PriA binds to replication forks, subsequently PriB then DnaT bind; DnaT then displaces ssDNA to generate the helicase loading substrate.

Its function is as follows. Involved in the restart of stalled replication forks, which reloads the replicative helicase on sites other than the origin of replication. Can function in multiple replication restart pathways. Displaces ssDNA from a PriB-ssDNA complex. Probably forms a spiral filament on ssDNA. The chain is Replication restart protein DnaT from Klebsiella pneumoniae (strain 342).